The following is a 386-amino-acid chain: Meiotic chromosome segregation protein C1539.02 (386 aa).

Disordered regions lie at residues Met1–Ser28, Arg46–Gln85, and Asp366–Gly386. Polar residues predominate over residues Ala15–Ser28.

Its subcellular location is the nucleus. In terms of biological role, required for meiotic chromosome segregation. The sequence is that of Meiotic chromosome segregation protein C1539.02 from Schizosaccharomyces pombe (strain 972 / ATCC 24843) (Fission yeast).